We begin with the raw amino-acid sequence, 485 residues long: Zinc finger protein 639 (485 aa).

Basic residues predominate over residues 1-14 (MNEYPKKRKRKTLH). Disordered stretches follow at residues 1-23 (MNEY…DSSG) and 54-80 (DNKD…ARNR). Phosphoserine is present on S60. A Glycyl lysine isopeptide (Lys-Gly) (interchain with G-Cter in SUMO2) cross-link involves residue K76. A Phosphoserine modification is found at S88. A disordered region spans residues 115-136 (ASPESVHQHTQEESPIEVHTSE). Residues K177, K181, and K226 each participate in a glycyl lysine isopeptide (Lys-Gly) (interchain with G-Cter in SUMO2) cross-link. 8 C2H2-type zinc fingers span residues 204 to 227 (YKCE…ILKH), 233 to 255 (NVCR…AKLH), 260 to 283 (YICK…ADTH), 289 to 311 (YWCE…FQEH), 374 to 397 (FVCQ…AIEH), 403 to 425 (HVCD…LNSH), 431 to 454 (YLCQ…DFKH), and 460 to 482 (HKCS…LQVH). The tract at residues 371-455 (KNFFVCQVCG…LKIHLDFKHS (85 aa)) is interaction with CTNNA2.

The protein belongs to the krueppel C2H2-type zinc-finger protein family. In terms of assembly, interacts with CTNNA2.

It localises to the nucleus. Functionally, binds DNA and may function as a transcriptional repressor. This is Zinc finger protein 639 (Znf639) from Mus musculus (Mouse).